A 316-amino-acid chain; its full sequence is Pantothenate kinase (316 aa).

95-102 provides a ligand contact to ATP; the sequence is GSVAVGKS.

It belongs to the prokaryotic pantothenate kinase family.

The protein localises to the cytoplasm. It carries out the reaction (R)-pantothenate + ATP = (R)-4'-phosphopantothenate + ADP + H(+). It functions in the pathway cofactor biosynthesis; coenzyme A biosynthesis; CoA from (R)-pantothenate: step 1/5. The protein is Pantothenate kinase of Shewanella baltica (strain OS223).